The chain runs to 314 residues: Homoserine O-acetyltransferase (314 aa).

Cys142 (acyl-thioester intermediate) is an active-site residue. Residues Lys163 and Ser192 each coordinate substrate. Catalysis depends on His235, which acts as the Proton acceptor. The active site involves Glu237. Arg249 serves as a coordination point for substrate.

The protein belongs to the MetA family.

Its subcellular location is the cytoplasm. The catalysed reaction is L-homoserine + acetyl-CoA = O-acetyl-L-homoserine + CoA. It participates in amino-acid biosynthesis; L-methionine biosynthesis via de novo pathway; O-acetyl-L-homoserine from L-homoserine: step 1/1. Its function is as follows. Transfers an acetyl group from acetyl-CoA to L-homoserine, forming acetyl-L-homoserine. The polypeptide is Homoserine O-acetyltransferase (Streptococcus thermophilus (strain ATCC BAA-491 / LMD-9)).